The primary structure comprises 199 residues: dITP/XTP pyrophosphatase (199 aa).

Substrate is bound at residue 7–12 (TGNAGK). Mg(2+) contacts are provided by E37 and D66. Catalysis depends on D66, which acts as the Proton acceptor. Residues S67, 146–149 (FGYD), K169, and 174–175 (HR) each bind substrate.

This sequence belongs to the HAM1 NTPase family. Homodimer. The cofactor is Mg(2+).

It catalyses the reaction XTP + H2O = XMP + diphosphate + H(+). The catalysed reaction is dITP + H2O = dIMP + diphosphate + H(+). It carries out the reaction ITP + H2O = IMP + diphosphate + H(+). Pyrophosphatase that catalyzes the hydrolysis of nucleoside triphosphates to their monophosphate derivatives, with a high preference for the non-canonical purine nucleotides XTP (xanthosine triphosphate), dITP (deoxyinosine triphosphate) and ITP. Seems to function as a house-cleaning enzyme that removes non-canonical purine nucleotides from the nucleotide pool, thus preventing their incorporation into DNA/RNA and avoiding chromosomal lesions. This is dITP/XTP pyrophosphatase from Deinococcus geothermalis (strain DSM 11300 / CIP 105573 / AG-3a).